The following is a 627-amino-acid chain: uncharacterized protein (627 aa).

This is an uncharacterized protein from Caenorhabditis elegans.